The primary structure comprises 713 residues: MAKPSHSSYVLQQLNNQREWGFLCDCCIAIDDIYFQAHKAVLAACSSYFRMFFMNHQHSTAQLNLSNMKISAECFDLILQFMYLGKIMTAPSSFEQFKVAMNYLQLYNVPDCLEDIQDADCSSSKCSSSASSRQSSKMIFGVRMYEDTVARNGNEANRWCAEPSSTVNTPHHREPEEESLQLANFPEPLFDVCKKSSVSKLSTPKERVSRRFGRSFTCDSCGFGFSCEKLLDEHVLTCTNRHSYQNTTRAYHRIVDIRDGKDSNIKAELAEKDSSKTFSAQPDKYREDANQAPDDSASTTGSRKSTVEAGIAGEEKSRATETKRIIIKMEPEDIPADDMKDFNIIKVTEKDCNESTDNDELEDEPEEPFYRYYVEEDVGIKKSGRKTLKPRMSISVDERGGLENMRPPNNTSPIQEDAENASCELCGLTITEEDLSSHYLAKHIENICACGKCGQILVKGRQLQEHAQRCGEPQDLTMNGLGNADEKMDMEENPDEQSEIRDMFVEMLDDFRDNHYQINSIQKKQLFKHSACPFRCPNCGQRFETENLVVEHMSSCLDQDMFKGAIMEENERDHRRKHFCNLCGKGFYQRCHLREHYTVHTKEKQFVCQTCGKQFLRERQLRLHNDMHKGMARYVCSICDQGNFRKHDHVRHMISHLSGGETICQVCFQIFPNNEQLEQHMDVHLYTCGICGAKFNLRKDMRSHYNAKHLKRT.

K3 is covalently cross-linked (Glycyl lysine isopeptide (Lys-Gly) (interchain with G-Cter in SUMO2)). Residues 24-91 (CDCCIAIDDI…MYLGKIMTAP (68 aa)) enclose the BTB domain. Residues K200 and K205 each participate in a glycyl lysine isopeptide (Lys-Gly) (interchain with G-Cter in SUMO2) cross-link. The C2H2-type 1; atypical zinc-finger motif lies at 216-242 (FTCDSCGFGFSCEKLLDEHVLTCTNRH). Residues K261, K266, K276, K284, K304, K316, K328, K340, and K346 each participate in a glycyl lysine isopeptide (Lys-Gly) (interchain with G-Cter in SUMO2) cross-link. The tract at residues 270–319 (AEKDSSKTFSAQPDKYREDANQAPDDSASTTGSRKSTVEAGIAGEEKSRA) is disordered. Position 355 is a phosphoserine (S355). T356 carries the phosphothreonine modification. Residue K381 forms a Glycyl lysine isopeptide (Lys-Gly) (interchain with G-Cter in SUMO2) linkage. Residues 448 to 470 (CACGKCGQILVKGRQLQEHAQRC) form a C2H2-type 2; atypical zinc finger. A Glycyl lysine isopeptide (Lys-Gly) (interchain with G-Cter in SUMO2) cross-link involves residue K528. The UBZ-type zinc finger occupies 533–558 (PFRCPNCGQRFETENLVVEHMSSCLD). K563 participates in a covalent cross-link: Glycyl lysine isopeptide (Lys-Gly) (interchain with G-Cter in SUMO2). 5 consecutive C2H2-type zinc fingers follow at residues 578–600 (HFCN…YTVH), 606–628 (FVCQ…NDMH), 634–656 (YVCS…MISH), 662–684 (TICQ…MDVH), and 686–709 (YTCG…NAKH).

As to quaternary structure, homodimer. Homodimer. Interacts (via BTB domain) with TRIM28 (unphosphorylated or phosphorylated form). Sumoylated with SUMO2 at Lys-328 and to a lesser extent at Lys-266. Sumoylation inhibits its transcriptional repression activity and regulates its subcellular localization. Expressed strongly in thymus and spleen, less in lymph nodes and peripheral blood mononuclear cells (PBMCs) and weakly in bone marrow. Strongly expressed in immature, but weakly in mature bone marrow-lymphocyte B.

The protein localises to the nucleus. It localises to the nucleoplasm. In terms of biological role, acts as a transcriptional repressor. Represses cAMP-responsive element (CRE)-mediated transcriptional activation. In addition, has a role in translesion DNA synthesis. Requires for UV-inducible RAD18 loading, PCNA monoubiquitination, POLH recruitment to replication factories and efficient translesion DNA synthesis. Plays a key role in the transcriptional regulation of T lymphocyte development. The protein is Zinc finger and BTB domain-containing protein 1 (Zbtb1) of Mus musculus (Mouse).